We begin with the raw amino-acid sequence, 322 residues long: Phospho-N-acetylmuramoyl-pentapeptide-transferase (322 aa).

Transmembrane regions (helical) follow at residues 6 to 26 (ASCI…PLLI), 54 to 74 (TMGG…VTAW), 82 to 102 (VWIL…DDGI), 122 to 142 (IIIA…FGLY), 145 to 165 (FAGV…WLVG), 176 to 196 (LDGL…YIAF), 200 to 220 (NFAI…FFIF), 227 to 247 (IFMG…VSIM), 255 to 275 (LLVG…VISF), and 302 to 322 (VDIV…AIWG).

This sequence belongs to the glycosyltransferase 4 family. MraY subfamily. Mg(2+) is required as a cofactor.

It localises to the cell membrane. It carries out the reaction UDP-N-acetyl-alpha-D-muramoyl-L-alanyl-gamma-D-glutamyl-L-lysyl-D-alanyl-D-alanine + di-trans,octa-cis-undecaprenyl phosphate = Mur2Ac(oyl-L-Ala-gamma-D-Glu-L-Lys-D-Ala-D-Ala)-di-trans,octa-cis-undecaprenyl diphosphate + UMP. It functions in the pathway cell wall biogenesis; peptidoglycan biosynthesis. Catalyzes the initial step of the lipid cycle reactions in the biosynthesis of the cell wall peptidoglycan: transfers peptidoglycan precursor phospho-MurNAc-pentapeptide from UDP-MurNAc-pentapeptide onto the lipid carrier undecaprenyl phosphate, yielding undecaprenyl-pyrophosphoryl-MurNAc-pentapeptide, known as lipid I. The polypeptide is Phospho-N-acetylmuramoyl-pentapeptide-transferase (Lactobacillus helveticus (strain DPC 4571)).